Reading from the N-terminus, the 263-residue chain is Trans-2-decenoyl-[acyl-carrier-protein] isomerase (263 aa).

The protein belongs to the enoyl-CoA hydratase/isomerase family. As to quaternary structure, homotetramer.

It catalyses the reaction (2E)-decenoyl-[ACP] = (3Z)-decenoyl-[ACP]. It participates in lipid metabolism; fatty acid biosynthesis. Catalyzes the isomerization of trans-2-decenoyl-ACP to cis-3-decenoyl-ACP. Required for survival at low pH. In Streptococcus mutans serotype c (strain ATCC 700610 / UA159), this protein is Trans-2-decenoyl-[acyl-carrier-protein] isomerase (fabM).